Here is a 479-residue protein sequence, read N- to C-terminus: POU domain, class 2, transcription factor 2 (479 aa).

Disordered stretches follow at residues 1-86 (MVHS…AQPH), 166-200 (TQAV…PSDL), 275-298 (SSLP…GRRR), 357-393 (PCSA…SQAS), and 409-479 (TLHP…PYQP). Basic and acidic residues predominate over residues 12–37 (RMSKPLEAEKQGLDSPSEHTDTERNG). Polar residues predominate over residues 38-60 (PDTNHQNPQNKTSPFSVSPTGPS). The segment covering 76-85 (APLPPQPAQP) has biased composition (pro residues). The 75-residue stretch at 195–269 (EEPSDLEELE…LLEKWLNDAE (75 aa)) folds into the POU-specific domain. Low complexity predominate over residues 275 to 288 (SSLPSPNQLSSPSL). A DNA-binding region (homeobox) is located at residues 297 to 356 (RRKKRTSIETNVRFALEKSFLANQKPTSEEILLIAEQLHMEKEVIRVWFCNRRQKEKRIN). The segment at 389 to 410 (LSQASSSLSTTVTTLSSAVGTL) is leucine-zipper. Gly residues predominate over residues 416-425 (AGGGGGGGGA).

This sequence belongs to the POU transcription factor family. Class-2 subfamily. Interacts with NR3C1, AR and PGR. Interacts with POU2AF1; the interaction increases POU2F2 transactivation activity. Isoform 3 is B-cell specific. Isoform 5 is expressed in B-cells and the immunoglobulin-expressing T-cell line MOLT-4, but not in the T-cell line BW5147.

Its subcellular location is the cytoplasm. The protein localises to the nucleus. With respect to regulation, transactivation activity is enhanced by transcriptional coactivator POU2AF1. Its function is as follows. Transcription factor that specifically binds to the octamer motif (5'-ATTTGCAT-3'). Regulates IL6 expression in B cells with POU2AF1. Regulates transcription in a number of tissues in addition to activating immunoglobulin gene expression. Modulates transcription transactivation by NR3C1, AR and PGR. Activates the U2 small nuclear RNA (snRNA) promoter. The sequence is that of POU domain, class 2, transcription factor 2 from Homo sapiens (Human).